Here is a 262-residue protein sequence, read N- to C-terminus: Acyl-[acyl-carrier-protein]--UDP-N-acetylglucosamine O-acyltransferase (262 aa).

Belongs to the transferase hexapeptide repeat family. LpxA subfamily. Homotrimer.

The protein localises to the cytoplasm. It carries out the reaction a (3R)-hydroxyacyl-[ACP] + UDP-N-acetyl-alpha-D-glucosamine = a UDP-3-O-[(3R)-3-hydroxyacyl]-N-acetyl-alpha-D-glucosamine + holo-[ACP]. The protein operates within glycolipid biosynthesis; lipid IV(A) biosynthesis; lipid IV(A) from (3R)-3-hydroxytetradecanoyl-[acyl-carrier-protein] and UDP-N-acetyl-alpha-D-glucosamine: step 1/6. Involved in the biosynthesis of lipid A, a phosphorylated glycolipid that anchors the lipopolysaccharide to the outer membrane of the cell. The polypeptide is Acyl-[acyl-carrier-protein]--UDP-N-acetylglucosamine O-acyltransferase (Histophilus somni (strain 129Pt) (Haemophilus somnus)).